A 344-amino-acid polypeptide reads, in one-letter code: Dihydroorotase (344 aa).

Positions 14 and 16 each coordinate Zn(2+). Substrate-binding positions include 16–18 and N42; that span reads HLR. Zn(2+)-binding residues include K99, H136, and H174. At K99 the chain carries N6-carboxylysine. Residue H136 coordinates substrate. L219 lines the substrate pocket. D247 provides a ligand contact to Zn(2+). The active site involves D247. The substrate site is built by H251 and A263.

It belongs to the metallo-dependent hydrolases superfamily. DHOase family. Class II DHOase subfamily. In terms of assembly, homodimer. Zn(2+) serves as cofactor.

The catalysed reaction is (S)-dihydroorotate + H2O = N-carbamoyl-L-aspartate + H(+). It functions in the pathway pyrimidine metabolism; UMP biosynthesis via de novo pathway; (S)-dihydroorotate from bicarbonate: step 3/3. Its function is as follows. Catalyzes the reversible cyclization of carbamoyl aspartate to dihydroorotate. This is Dihydroorotase from Teredinibacter turnerae (strain ATCC 39867 / T7901).